The sequence spans 83 residues: MVVIRLARGGAKKRPFFNIVAADSRNRRDGRFIERVGYYNPVASGAEKGLVVNTERLAYWEQNGAQLSPTVARLVKQAAKAAA.

Belongs to the bacterial ribosomal protein bS16 family.

This chain is Small ribosomal subunit protein bS16, found in Azoarcus sp. (strain BH72).